We begin with the raw amino-acid sequence, 66 residues long: Muscarinic toxin 4 (66 aa).

4 cysteine pairs are disulfide-bonded: C3–C24, C17–C42, C46–C58, and C59–C64.

Belongs to the three-finger toxin family. Short-chain subfamily. Aminergic toxin sub-subfamily. In terms of assembly, monomer. Expressed by the venom gland.

It localises to the secreted. Its function is as follows. Binds to the muscarinic acetylcholine receptor (CHRM). This Dendroaspis angusticeps (Eastern green mamba) protein is Muscarinic toxin 4.